A 249-amino-acid chain; its full sequence is ATP-dependent Clp protease proteolytic subunit (249 aa).

Residue Ser107 is the Nucleophile of the active site. The active site involves His132. The segment at 212–249 is disordered; sequence ESASQDNSLDPDAPDESASQDNSLDPDAPDETRPPKLR.

The protein belongs to the peptidase S14 family. Component of the chloroplastic Clp protease core complex.

It is found in the plastid. The protein localises to the chloroplast stroma. The catalysed reaction is Hydrolysis of proteins to small peptides in the presence of ATP and magnesium. alpha-casein is the usual test substrate. In the absence of ATP, only oligopeptides shorter than five residues are hydrolyzed (such as succinyl-Leu-Tyr-|-NHMec, and Leu-Tyr-Leu-|-Tyr-Trp, in which cleavage of the -Tyr-|-Leu- and -Tyr-|-Trp bonds also occurs).. Functionally, cleaves peptides in various proteins in a process that requires ATP hydrolysis. Has a chymotrypsin-like activity. Plays a major role in the degradation of misfolded proteins. In Oenothera elata subsp. hookeri (Hooker's evening primrose), this protein is ATP-dependent Clp protease proteolytic subunit.